Here is a 359-residue protein sequence, read N- to C-terminus: Phosphoserine aminotransferase (359 aa).

L-glutamate is bound at residue Arg-42. Residues 76–77, Trp-102, Thr-152, Asp-171, and Gln-194 contribute to the pyridoxal 5'-phosphate site; that span reads AS. Lys-195 bears the N6-(pyridoxal phosphate)lysine mark. Pyridoxal 5'-phosphate is bound at residue 236–237; the sequence is NT.

This sequence belongs to the class-V pyridoxal-phosphate-dependent aminotransferase family. SerC subfamily. As to quaternary structure, homodimer. It depends on pyridoxal 5'-phosphate as a cofactor.

Its subcellular location is the cytoplasm. It carries out the reaction O-phospho-L-serine + 2-oxoglutarate = 3-phosphooxypyruvate + L-glutamate. The enzyme catalyses 4-(phosphooxy)-L-threonine + 2-oxoglutarate = (R)-3-hydroxy-2-oxo-4-phosphooxybutanoate + L-glutamate. The protein operates within amino-acid biosynthesis; L-serine biosynthesis; L-serine from 3-phospho-D-glycerate: step 2/3. It participates in cofactor biosynthesis; pyridoxine 5'-phosphate biosynthesis; pyridoxine 5'-phosphate from D-erythrose 4-phosphate: step 3/5. Functionally, catalyzes the reversible conversion of 3-phosphohydroxypyruvate to phosphoserine and of 3-hydroxy-2-oxo-4-phosphonooxybutanoate to phosphohydroxythreonine. The protein is Phosphoserine aminotransferase of Ruthia magnifica subsp. Calyptogena magnifica.